The sequence spans 454 residues: MALNVVILAAGKGTRMRSDLPKVLHPIAHKSMVQHVIDTAHSIGSNAIQLVYGYGADKLKSALGEQQLNWMLQAEQLGTGHAVAQAIPNIDDNDTVLILYGDVPLIQASTLEALLAARPDNGVAILTVNLSNPTGYGRIVREQGKVVGIVEQKDANAEQLAINEINTGIMAVPGKALKTWLGRLSNNNAQGEYYLTDIIAMAHADGVEINTAQPQSAIEVEGANNRVQLAQLERAYQAREAEKLMIAGANLRDPSRIDIRGEVTVGMDVMVDVNVIFEGKVVIGNNVSIGAGAILIDCEIADNAEIKPYSIIEGAKLGVAASAGPFARLRPGAELMQDAHIGNFVEMKKAVLGVGSKAGHLAYLGDAQIGAGVNIGAGTITCNYDGANKHLTVIEDNVFVGSDTQLVAPVTIGKGATLGAGSTITRDVGEDELVITRVKQKHLTGWQRPVKIKK.

The segment at 1–226 (MALNVVILAA…AIEVEGANNR (226 aa)) is pyrophosphorylase. Residues 8–11 (LAAG), Lys22, Gln73, 78–79 (GT), 100–102 (YGD), Gly137, Glu151, Asn166, and Asn224 contribute to the UDP-N-acetyl-alpha-D-glucosamine site. Mg(2+) is bound at residue Asp102. Residue Asn224 participates in Mg(2+) binding. Residues 227-247 (VQLAQLERAYQAREAEKLMIA) are linker. The N-acetyltransferase stretch occupies residues 248 to 454 (GANLRDPSRI…GWQRPVKIKK (207 aa)). 2 residues coordinate UDP-N-acetyl-alpha-D-glucosamine: Arg330 and Lys348. His360 serves as the catalytic Proton acceptor. UDP-N-acetyl-alpha-D-glucosamine-binding residues include Tyr363 and Asn374. Residues Ala377, 383–384 (NY), Ser402, Ala420, and Arg437 contribute to the acetyl-CoA site.

It in the N-terminal section; belongs to the N-acetylglucosamine-1-phosphate uridyltransferase family. This sequence in the C-terminal section; belongs to the transferase hexapeptide repeat family. In terms of assembly, homotrimer. Requires Mg(2+) as cofactor.

The protein resides in the cytoplasm. The catalysed reaction is alpha-D-glucosamine 1-phosphate + acetyl-CoA = N-acetyl-alpha-D-glucosamine 1-phosphate + CoA + H(+). It carries out the reaction N-acetyl-alpha-D-glucosamine 1-phosphate + UTP + H(+) = UDP-N-acetyl-alpha-D-glucosamine + diphosphate. Its pathway is nucleotide-sugar biosynthesis; UDP-N-acetyl-alpha-D-glucosamine biosynthesis; N-acetyl-alpha-D-glucosamine 1-phosphate from alpha-D-glucosamine 6-phosphate (route II): step 2/2. It participates in nucleotide-sugar biosynthesis; UDP-N-acetyl-alpha-D-glucosamine biosynthesis; UDP-N-acetyl-alpha-D-glucosamine from N-acetyl-alpha-D-glucosamine 1-phosphate: step 1/1. It functions in the pathway bacterial outer membrane biogenesis; LPS lipid A biosynthesis. In terms of biological role, catalyzes the last two sequential reactions in the de novo biosynthetic pathway for UDP-N-acetylglucosamine (UDP-GlcNAc). The C-terminal domain catalyzes the transfer of acetyl group from acetyl coenzyme A to glucosamine-1-phosphate (GlcN-1-P) to produce N-acetylglucosamine-1-phosphate (GlcNAc-1-P), which is converted into UDP-GlcNAc by the transfer of uridine 5-monophosphate (from uridine 5-triphosphate), a reaction catalyzed by the N-terminal domain. This is Bifunctional protein GlmU from Shewanella sp. (strain ANA-3).